We begin with the raw amino-acid sequence, 25 residues long: Omega-conotoxin MVIIB (25 aa).

Intrachain disulfides connect Cys-1-Cys-16, Cys-8-Cys-20, and Cys-15-Cys-25. At Cys-25 the chain carries Cysteine amide.

The protein belongs to the conotoxin O1 superfamily. In terms of tissue distribution, expressed by the venom duct.

It localises to the secreted. Functionally, omega-conotoxins act at presynaptic membranes, they bind and block voltage-gated calcium channels (Cav). This chain is Omega-conotoxin MVIIB, found in Conus magus (Magical cone).